The primary structure comprises 290 residues: AA9 family lytic polysaccharide monooxygenase A (290 aa).

Residues 1–17 (MKLSLLASVALVPFVSA) form the signal peptide. His18 and His101 together coordinate Cu(2+). Cysteines 67 and 189 form a disulfide. His176 serves as a coordination point for O2. Cu(2+) is bound at residue Tyr187. 2 N-linked (GlcNAc...) asparagine glycosylation sites follow: Asn220 and Asn254. The disordered stretch occupies residues 240 to 290 (GGSGSGSSSYSKVANVTSSDESSQSGASSSQGTVSTCPNKYNRRHARQFKP). Positions 245 to 275 (GSSSYSKVANVTSSDESSQSGASSSQGTVST) are enriched in low complexity. Residues 280–290 (YNRRHARQFKP) show a composition bias toward basic residues.

This sequence belongs to the polysaccharide monooxygenase AA9 family. The cofactor is Cu(2+).

Its subcellular location is the secreted. It catalyses the reaction [(1-&gt;4)-beta-D-glucosyl]n+m + reduced acceptor + O2 = 4-dehydro-beta-D-glucosyl-[(1-&gt;4)-beta-D-glucosyl]n-1 + [(1-&gt;4)-beta-D-glucosyl]m + acceptor + H2O.. Functionally, lytic polysaccharide monooxygenase (LPMO) that depolymerizes crystalline and amorphous polysaccharides via the oxidation of scissile alpha- or beta-(1-4)-glycosidic bonds, yielding exclusively C1 oxidation products. Catalysis by LPMOs requires the reduction of the active-site copper from Cu(II) to Cu(I) by a reducing agent and H(2)O(2) or O(2) as a cosubstrate. The polypeptide is AA9 family lytic polysaccharide monooxygenase A (Aspergillus fumigatus (strain ATCC MYA-4609 / CBS 101355 / FGSC A1100 / Af293) (Neosartorya fumigata)).